Consider the following 356-residue polypeptide: sn-glycerol-3-phosphate import ATP-binding protein UgpC (356 aa).

Residues 4-235 (LKLQAVTKSW…PASRFVASFI (232 aa)) form the ABC transporter domain. Residue 37–44 (GPSGCGKS) participates in ATP binding.

The protein belongs to the ABC transporter superfamily. sn-glycerol-3-phosphate importer (TC 3.A.1.1.3) family. As to quaternary structure, the complex is composed of two ATP-binding proteins (UgpC), two transmembrane proteins (UgpA and UgpE) and a solute-binding protein (UgpB).

The protein localises to the cell inner membrane. It carries out the reaction sn-glycerol 3-phosphate(out) + ATP + H2O = sn-glycerol 3-phosphate(in) + ADP + phosphate + H(+). Part of the ABC transporter complex UgpBAEC involved in sn-glycerol-3-phosphate (G3P) import. Responsible for energy coupling to the transport system. The polypeptide is sn-glycerol-3-phosphate import ATP-binding protein UgpC (Salmonella typhimurium (strain LT2 / SGSC1412 / ATCC 700720)).